The primary structure comprises 298 residues: Porphobilinogen deaminase (298 aa).

Position 239 is an S-(dipyrrolylmethanemethyl)cysteine (cysteine 239).

Belongs to the HMBS family. In terms of assembly, monomer. Dipyrromethane is required as a cofactor.

It carries out the reaction 4 porphobilinogen + H2O = hydroxymethylbilane + 4 NH4(+). The protein operates within porphyrin-containing compound metabolism; protoporphyrin-IX biosynthesis; coproporphyrinogen-III from 5-aminolevulinate: step 2/4. Functionally, tetrapolymerization of the monopyrrole PBG into the hydroxymethylbilane pre-uroporphyrinogen in several discrete steps. This chain is Porphobilinogen deaminase, found in Ehrlichia canis (strain Jake).